A 390-amino-acid polypeptide reads, in one-letter code: MTTTAVTHIASLVTNDPSLGNGTPLGLIQDAAVVIDGDRIVWTGESSKAPATDNVLDAAGRAVVPGFVDSHSHLVFAGDRTQEFNARMSGQPYRAGGIRTTVAATRAASDEELSANVARYLAEALRQGTTTFETKSGYGLTVEDEARALRIAGRHTDEVTYLGAHIVSPDYADDPAGYVDLVTGPMLEACAPHARWIDVFCEQGAFDGDQARAILTAGRAKGLHPRIHANQLTYGPGVQLAVELDAASADHCTHLTDADVDALGQGDTVATLLPGAEFSTRATWPDARRLLDAGATVALSTDCNPGSSFTSSVPFCIALAVRDMGMTPDEAIWSATAGGAAALRRTDIGRITPGARADLVLLDAPSHVHLAYRPGVPLVSAVWRSGQRVV.

Residues His-71 and His-73 each contribute to the Fe(3+) site. Positions 71 and 73 each coordinate Zn(2+). Residues Arg-80, Tyr-138, and His-165 each coordinate 4-imidazolone-5-propanoate. Tyr-138 is an N-formimidoyl-L-glutamate binding site. His-228 lines the Fe(3+) pocket. Residue His-228 coordinates Zn(2+). Gln-231 provides a ligand contact to 4-imidazolone-5-propanoate. Asp-302 provides a ligand contact to Fe(3+). Asp-302 is a binding site for Zn(2+). Residues Asn-304 and Gly-306 each coordinate N-formimidoyl-L-glutamate. 4-imidazolone-5-propanoate is bound at residue Ser-307.

This sequence belongs to the metallo-dependent hydrolases superfamily. HutI family. Requires Zn(2+) as cofactor. The cofactor is Fe(3+).

The protein resides in the cytoplasm. The catalysed reaction is 4-imidazolone-5-propanoate + H2O = N-formimidoyl-L-glutamate. The protein operates within amino-acid degradation; L-histidine degradation into L-glutamate; N-formimidoyl-L-glutamate from L-histidine: step 3/3. Its function is as follows. Catalyzes the hydrolytic cleavage of the carbon-nitrogen bond in imidazolone-5-propanoate to yield N-formimidoyl-L-glutamate. It is the third step in the universal histidine degradation pathway. This Streptomyces griseus subsp. griseus (strain JCM 4626 / CBS 651.72 / NBRC 13350 / KCC S-0626 / ISP 5235) protein is Imidazolonepropionase.